Consider the following 818-residue polypeptide: Probable beta-glucosidase I (818 aa).

A glycan (N-linked (GlcNAc...) asparagine) is linked at Asn176. Residue Asp204 is part of the active site. The region spanning 374 to 534 is the PA14 domain; the sequence is DGKPGFTFRV…SQEELISNAV (161 aa). 2 N-linked (GlcNAc...) asparagine glycosylation sites follow: Asn453 and Asn472.

It belongs to the glycosyl hydrolase 3 family.

It localises to the secreted. The catalysed reaction is Hydrolysis of terminal, non-reducing beta-D-glucosyl residues with release of beta-D-glucose.. Its pathway is glycan metabolism; cellulose degradation. In terms of biological role, beta-glucosidases are one of a number of cellulolytic enzymes involved in the degradation of cellulosic biomass. Catalyzes the last step releasing glucose from the inhibitory cellobiose. This Aspergillus niger (strain ATCC MYA-4892 / CBS 513.88 / FGSC A1513) protein is Probable beta-glucosidase I (bglI).